We begin with the raw amino-acid sequence, 1133 residues long: Eukaryotic translation initiation factor 3 subunit A (1133 aa).

A PCI domain is found at 317–498 (IQRMTSHVLI…HCVHFGTDLS (182 aa)). Coiled coils occupy residues 573-700 (KKIE…YFER) and 784-886 (EEER…EADS). Residues 810 to 893 (KEEERRRAEE…ADSWRDRRGG (84 aa)) show a composition bias toward basic and acidic residues. Positions 810–1133 (KEEERRRAEE…DGWTDVKHHR (324 aa)) are disordered. The span at 895 to 909 (APAAAAQPNPAAQEA) shows a compositional bias: low complexity. Basic and acidic residues-rich tracts occupy residues 920-944 (GAREPRGEDAPKKDGVYQPRFRDVR), 954-1081 (VERR…DSAW), and 1097-1117 (TRQDQAKPKDDRREERPKEAR).

This sequence belongs to the eIF-3 subunit A family. As to quaternary structure, component of the eukaryotic translation initiation factor 3 (eIF-3) complex.

It is found in the cytoplasm. Its function is as follows. RNA-binding component of the eukaryotic translation initiation factor 3 (eIF-3) complex, which is involved in protein synthesis of a specialized repertoire of mRNAs and, together with other initiation factors, stimulates binding of mRNA and methionyl-tRNAi to the 40S ribosome. The eIF-3 complex specifically targets and initiates translation of a subset of mRNAs involved in cell proliferation. The protein is Eukaryotic translation initiation factor 3 subunit A of Aedes aegypti (Yellowfever mosquito).